The following is a 365-amino-acid chain: 3-dehydroquinate synthase (365 aa).

Residues 72 to 77, 130 to 131, lysine 142, and lysine 151 each bind NAD(+); these read SGEKEK and TT. Glutamate 184, histidine 247, and histidine 264 together coordinate Zn(2+).

It belongs to the sugar phosphate cyclases superfamily. Dehydroquinate synthase family. It depends on Co(2+) as a cofactor. Zn(2+) serves as cofactor. The cofactor is NAD(+).

The protein resides in the cytoplasm. It catalyses the reaction 7-phospho-2-dehydro-3-deoxy-D-arabino-heptonate = 3-dehydroquinate + phosphate. Its pathway is metabolic intermediate biosynthesis; chorismate biosynthesis; chorismate from D-erythrose 4-phosphate and phosphoenolpyruvate: step 2/7. In terms of biological role, catalyzes the conversion of 3-deoxy-D-arabino-heptulosonate 7-phosphate (DAHP) to dehydroquinate (DHQ). This chain is 3-dehydroquinate synthase, found in Bacillus cereus (strain AH187).